A 162-amino-acid polypeptide reads, in one-letter code: Urease accessory protein UreE 1 (162 aa).

The tract at residues 143–162 (SGGHQHHHGHDHDHHHPDHE) is disordered. Basic and acidic residues predominate over residues 152-162 (HDHDHHHPDHE).

Belongs to the UreE family.

It is found in the cytoplasm. In terms of biological role, involved in urease metallocenter assembly. Binds nickel. Probably functions as a nickel donor during metallocenter assembly. This is Urease accessory protein UreE 1 from Brucella suis biovar 1 (strain 1330).